Reading from the N-terminus, the 70-residue chain is DNA gyrase inhibitor YacG (70 aa).

Zn(2+) contacts are provided by Cys20, Cys23, Cys35, and Cys39.

This sequence belongs to the DNA gyrase inhibitor YacG family. As to quaternary structure, interacts with GyrB. The cofactor is Zn(2+).

Its function is as follows. Inhibits all the catalytic activities of DNA gyrase by preventing its interaction with DNA. Acts by binding directly to the C-terminal domain of GyrB, which probably disrupts DNA binding by the gyrase. This is DNA gyrase inhibitor YacG from Rhizobium etli (strain CIAT 652).